Here is a 154-residue protein sequence, read N- to C-terminus: MGRFISVSFGLLVVFLSLSGTGADCPSEWSSHEGHCYKVFKLLKTWEDAEKFCTQQANGWHLASIESVEEANFVAQLASETLTKSKYHAWIGLRDQSKRQQCSSHWTDGSAVSYETVTKYTKCFGLNKETKYHEWITLPCGDKNPFICKSWVLH.

Positions 1 to 23 are cleaved as a signal peptide; the sequence is MGRFISVSFGLLVVFLSLSGTGA. 3 cysteine pairs are disulfide-bonded: Cys-25–Cys-36, Cys-53–Cys-148, and Cys-123–Cys-140. One can recognise a C-type lectin domain in the interval 32-149; sequence HEGHCYKVFK…CGDKNPFICK (118 aa).

Belongs to the snaclec family. As to quaternary structure, heterodimer of subunits alpha and beta; disulfide-linked. Expressed by the venom gland.

It localises to the secreted. Functionally, inhibits ristocetin-induced platelet aggregation via binding to platelet glycoprotein Ibalpha (GP1BA). The protein is Snaclec dabocetin subunit alpha of Daboia siamensis (Eastern Russel's viper).